Reading from the N-terminus, the 436-residue chain is 3-ketoacyl-CoA thiolase (436 aa).

Catalysis depends on cysteine 99, which acts as the Acyl-thioester intermediate. Catalysis depends on proton acceptor residues histidine 392 and cysteine 422.

The protein belongs to the thiolase-like superfamily. Thiolase family. Heterotetramer of two alpha chains (FadJ) and two beta chains (FadI).

It is found in the cytoplasm. It catalyses the reaction an acyl-CoA + acetyl-CoA = a 3-oxoacyl-CoA + CoA. It participates in lipid metabolism; fatty acid beta-oxidation. Its function is as follows. Catalyzes the final step of fatty acid oxidation in which acetyl-CoA is released and the CoA ester of a fatty acid two carbons shorter is formed. The polypeptide is 3-ketoacyl-CoA thiolase (Salmonella paratyphi A (strain AKU_12601)).